The primary structure comprises 349 residues: Protein-glutamate methylesterase/protein-glutamine glutaminase (349 aa).

In terms of domain architecture, Response regulatory spans 5-122 (RVLSVDDSAL…REGMLAYSEM (118 aa)). Aspartate 56 carries the 4-aspartylphosphate modification. A CheB-type methylesterase domain is found at 152-344 (LLSSEKLIAI…QQMLAKISAG (193 aa)). Active-site residues include serine 164, histidine 190, and aspartate 286.

The protein belongs to the CheB family. Phosphorylated by CheA. Phosphorylation of the N-terminal regulatory domain activates the methylesterase activity.

Its subcellular location is the cytoplasm. It catalyses the reaction [protein]-L-glutamate 5-O-methyl ester + H2O = L-glutamyl-[protein] + methanol + H(+). It carries out the reaction L-glutaminyl-[protein] + H2O = L-glutamyl-[protein] + NH4(+). Functionally, involved in chemotaxis. Part of a chemotaxis signal transduction system that modulates chemotaxis in response to various stimuli. Catalyzes the demethylation of specific methylglutamate residues introduced into the chemoreceptors (methyl-accepting chemotaxis proteins or MCP) by CheR. Also mediates the irreversible deamidation of specific glutamine residues to glutamic acid. The polypeptide is Protein-glutamate methylesterase/protein-glutamine glutaminase (Salmonella choleraesuis (strain SC-B67)).